Reading from the N-terminus, the 439-residue chain is Tol-Pal system protein TolB (439 aa).

An N-terminal signal peptide occupies residues 1–22; sequence MTKFPRWLAILVGLLFPLSALT.

Belongs to the TolB family. In terms of assembly, the Tol-Pal system is composed of five core proteins: the inner membrane proteins TolA, TolQ and TolR, the periplasmic protein TolB and the outer membrane protein Pal. They form a network linking the inner and outer membranes and the peptidoglycan layer.

It localises to the periplasm. Its function is as follows. Part of the Tol-Pal system, which plays a role in outer membrane invagination during cell division and is important for maintaining outer membrane integrity. The sequence is that of Tol-Pal system protein TolB from Xylella fastidiosa (strain M12).